A 364-amino-acid polypeptide reads, in one-letter code: Protein spindle-F (364 aa).

The tract at residues 1–26 (MEASAAKITPMASSMSASGSTNSPSS) is disordered. A compositionally biased stretch (low complexity) spans 9 to 26 (TPMASSMSASGSTNSPSS). Residues 32 to 114 (ALQVALQTIK…GMVSNENRRL (83 aa)) adopt a coiled-coil conformation. The residue at position 53 (Ser-53) is a Phosphoserine. The disordered stretch occupies residues 56–75 (EENQQLREASSRSEGAPRAN). Phosphoserine is present on residues Ser-85, Ser-172, and Ser-202. The stretch at 210-243 (AKRCLDGLQELRREAMKQQQELRSVMTLLENRIA) forms a coiled coil. A phosphoserine mark is found at Ser-264 and Ser-270. Residues 310-336 (EKTCPMCGKQYSSQVSFNAFREHVEMH) form a UBZ1-type zinc finger. Cys-313 and Cys-316 together coordinate Zn(2+). At Ser-325 the chain carries Phosphoserine. The Zn(2+) site is built by His-332 and His-336. Ser-349 bears the Phosphoserine mark.

In terms of assembly, forms homooligomers. Interacts with the dynein light chain ctp. Interacts (via C-terminus) with IKKepsilon; this leads to phosphorylation of spn-F. Forms ternary complexes with ctp and IKKepsilon; this is required for spn-F redistribution from puncta in larval neurons and for dendrite pruning. Interacts with ctp and IKKepsilon through distinct regions. Interacts (via C-terminus) with jvl. In terms of processing, phosphorylated by IKKepsilon. Phosphorylation is required for spn-F neuronal distribution and dendrite pruning and reduces spn-F homooligomerization. It does not lead to spn-F degradation. In pupal bristles, localizes to the bristle tip throughout the elongation period (at protein level).

The protein resides in the cytoplasm. Its subcellular location is the cytoskeleton. It is found in the cell projection. The protein localises to the axon. It localises to the dendrite. The protein resides in the perikaryon. Functionally, plays a role in oocyte axis determination and microtubule organization during oogenesis. Also required for polarized organization of the bristle. Required, with jvl, for activation of the kinase IKKepsilon in the germ line. Also required for localization of IKKepsilon to the distal tip of elongating bristles by acting as an adapter linking IKKepsilon and cytoplasmic dynein. Involved in dendrite pruning in larval sensory neurons during metamorphosis. In Drosophila melanogaster (Fruit fly), this protein is Protein spindle-F.